Here is a 226-residue protein sequence, read N- to C-terminus: uncharacterized protein (226 aa).

The HTH arsR-type domain maps to 1-92 (MNPNIAKISS…QLLHIAPKAK (92 aa)). Positions 32–55 (AGELAYLANIKPQTASFHLNKLLE) form a DNA-binding region, H-T-H motif.

This is an uncharacterized protein from Bacillus subtilis (strain 168).